The following is a 312-amino-acid chain: Small ribosomal subunit biogenesis GTPase RsgA (312 aa).

A CP-type G domain is found at 86–245 (QSFLKRPAVA…LADTPGFNRP (160 aa)). GTP-binding positions include 135–138 (TKID) and 187–195 (GPSGVGKTS). Zn(2+) is bound by residues cysteine 270, cysteine 275, histidine 277, and cysteine 283.

It belongs to the TRAFAC class YlqF/YawG GTPase family. RsgA subfamily. As to quaternary structure, monomer. Associates with 30S ribosomal subunit, binds 16S rRNA. Requires Zn(2+) as cofactor.

It localises to the cytoplasm. Functionally, one of several proteins that assist in the late maturation steps of the functional core of the 30S ribosomal subunit. Helps release RbfA from mature subunits. May play a role in the assembly of ribosomal proteins into the subunit. Circularly permuted GTPase that catalyzes slow GTP hydrolysis, GTPase activity is stimulated by the 30S ribosomal subunit. This is Small ribosomal subunit biogenesis GTPase RsgA from Prochlorococcus marinus (strain NATL1A).